The following is a 432-amino-acid chain: Probable imidazolonepropionase (432 aa).

Positions 159 and 192 each coordinate 4-imidazolone-5-propanoate. Tyr159 lines the N-formimidoyl-L-glutamate pocket. His260 provides a ligand contact to Fe(3+). His260 provides a ligand contact to Zn(2+). Glu263 is a 4-imidazolone-5-propanoate binding site. A Fe(3+)-binding site is contributed by Asp334. A Zn(2+)-binding site is contributed by Asp334. Asn336 contacts N-formimidoyl-L-glutamate.

It belongs to the metallo-dependent hydrolases superfamily. HutI family. It depends on Zn(2+) as a cofactor. The cofactor is Fe(3+).

It carries out the reaction 4-imidazolone-5-propanoate + H2O = N-formimidoyl-L-glutamate. It functions in the pathway amino-acid degradation; L-histidine degradation into L-glutamate; N-formimidoyl-L-glutamate from L-histidine: step 3/3. The protein is Probable imidazolonepropionase (amdhd1) of Xenopus tropicalis (Western clawed frog).